The primary structure comprises 221 residues: Phosphoenolpyruvate guanylyltransferase (221 aa).

Residues T154, G169, and S172 each coordinate phosphoenolpyruvate.

It belongs to the CofC family.

It catalyses the reaction phosphoenolpyruvate + GTP + H(+) = enolpyruvoyl-2-diphospho-5'-guanosine + diphosphate. The protein operates within cofactor biosynthesis; coenzyme F420 biosynthesis. In terms of biological role, guanylyltransferase that catalyzes the activation of phosphoenolpyruvate (PEP) as enolpyruvoyl-2-diphospho-5'-guanosine, via the condensation of PEP with GTP. It is involved in the biosynthesis of coenzyme F420, a hydride carrier cofactor. The polypeptide is Phosphoenolpyruvate guanylyltransferase (Mycolicibacterium smegmatis (strain ATCC 700084 / mc(2)155) (Mycobacterium smegmatis)).